Here is a 160-residue protein sequence, read N- to C-terminus: Transcription elongation factor GreB (160 aa).

This sequence belongs to the GreA/GreB family. GreB subfamily.

Its function is as follows. Necessary for efficient RNA polymerase transcription elongation past template-encoded arresting sites. The arresting sites in DNA have the property of trapping a certain fraction of elongating RNA polymerases that pass through, resulting in locked ternary complexes. Cleavage of the nascent transcript by cleavage factors such as GreA or GreB allows the resumption of elongation from the new 3'terminus. GreB releases sequences of up to 9 nucleotides in length. This chain is Transcription elongation factor GreB, found in Vibrio vulnificus (strain YJ016).